We begin with the raw amino-acid sequence, 1207 residues long: GGCYQSCEPHTLKCGSVSFEAKCKSGWSCYPVTDNIASNACDRFKSCQDRWATVKETDAPCTSCVPGFQLTSRGYCSQDLNECNRNNGGCTNGKCINTEGSYHCDCDRGYLATSSRTKCEGVECEPLTLANGKVQSNKGSWIFGSRALFTCDDQARSVLDGPSYITCNLDAAGLTASWSGTSPTCQNDDEHDRFAEVFHLRFHGKKLDGVSLVTGLSPRSTAYRCHKDSTCQGIMTRAEEFEVSATGLTVYDGGVLTKTLGQSRADGDALTDDASMDIYTKVDVSSAAASSYQDVLDAMVGTSLGCYTTSSMASWEDYTLDDGRATTCNQICLQAGYDYFGIQASDKCWCGQKPPVEKVGDGECSTVCVNQANILCGSATTANIYQVYRDRSLGFCYTGNLGTETVPSAKTKDECVTVCRGQGYYTANIRNSGECFCDNSLPGGPRVDPTKCDEDGSGHSTVYMTNPAYFMSNDQGAQINPMTTRMYDDTGSVTGMTTGLFQRLPGLRIFTSDRLVLYSAEEVQFHDVQNDYADTCGEIKRIDGESDRSGDLILHFFHFRLSQLAKHTSDRASRVYIYAQKVVIDCDIQVQFSLMIRATKIVVSTGKVFKILVGSESSQIEMDVDDVKNNGPPRNLQQMKDSLQCARMLAQSWDDTEKQKLAFNILHEMTSPTAGNEAQRSVQTMASALKLQLEGMFKNDIHHVPSYSAAYFTYLMKADSDIVNAYAARLNALEVITTSRDDFLNYTQELEKIHQDTSIAQAKKRFDETMKLYKKEDLVYTKLQAAYDTALTNLRGVIPTFRKSIEAQEDHLRFKALLSFLELGVAAMDPAAVASVSKGFYDDVTDIAASSIWGIDQVVTNIDSFTDVMTNNLNEMMSEVKPYDGTKYAYEIEKVANMHVFVEEWRNFQVEVNNILGDDTVSALGGAGDYGRNLVKLTNIGMALTNAMINRAEKTRDAAQKRTTWDLLVEQGRRTTEVIKGFKAANSERAAANSVVAEQIRDITSEINGDLANFCEAYFFEKLEPCPKSTQPRFGGDLLSVQLSISRAEREAASLGLDGSPVSREVTITNTDASEDCIDVTQCPVTVFKRDRAFSYEVPIDNFDLSDWDKYRVKEIEVKAIGATPDRTETDLKLFVRSSGSFSGKSGGTHYNFLTDDFFCVYEYDINSPIDAPPESASGRCTVYARGSKKDMTRYATPYAAWMIEVD.

The region spanning 79 to 120 (DLNECNRNNGGCTNGKCINTEGSYHCDCDRGYLATSSRTKCE) is the EGF-like domain. 5 disulfides stabilise this stretch: Cys-83-Cys-95, Cys-90-Cys-104, Cys-106-Cys-119, Cys-124-Cys-167, and Cys-151-Cys-185. The Sushi domain maps to 122 to 187 (VECEPLTLAN…WSGTSPTCQN (66 aa)). WSC domains are found at residues 300 to 391 (VGTS…YRDR) and 392 to 476 (SLGF…NDQG). Asn-745 is a glycosylation site (N-linked (GlcNAc...) asparagine).

In terms of assembly, dimer; probably disulfide-linked. Interacts with Cav2.2/CACNA1B calcium channel. Expressed exclusively in the four pharyngeal lobes and in tissue located at the base of the teeth. No distinct expression is visible in the putative venom glands or elsewhere in the pharynx.

It localises to the secreted. In terms of biological role, potent venom presynaptic neurotoxin that promotes a long-lasting increase in spontaneous neurotransmitter release at the peripheral and central synapses by selective activation of Cav2.2/CACNA1B (N-type) channels. In addition, it drastically enhances synaptic-vesicle recycling, an effect that is prevented by the Cav2.2-specific inhibitor conotoxin-MVIIA. It activates Cav2.2/CACNA1B by shifting the current-voltage relationship of channels towards more hyperpolarized potentiels in a reversible manner. May have two separate sites of action on Cav2.2: one high affinity linked to changes in gating properties, and a second low affinity that results in block of current activity. This is Glycerotoxin paralog 1 from Glycera tridactyla (Glycerine worm).